Consider the following 173-residue polypeptide: Nucleoside-triphosphatase THEP1 (173 aa).

ATP-binding positions include 15–22 (GMPGVGKT) and 101–108 (LKIIDEIG).

This sequence belongs to the THEP1 NTPase family.

The catalysed reaction is a ribonucleoside 5'-triphosphate + H2O = a ribonucleoside 5'-diphosphate + phosphate + H(+). Its function is as follows. Has nucleotide phosphatase activity towards ATP, GTP, CTP, TTP and UTP. May hydrolyze nucleoside diphosphates with lower efficiency. This is Nucleoside-triphosphatase THEP1 from Pyrobaculum aerophilum (strain ATCC 51768 / DSM 7523 / JCM 9630 / CIP 104966 / NBRC 100827 / IM2).